We begin with the raw amino-acid sequence, 429 residues long: Enolase (429 aa).

Gln162 serves as a coordination point for (2R)-2-phosphoglycerate. Glu204 acts as the Proton donor in catalysis. Mg(2+)-binding residues include Asp241, Glu283, and Asp310. (2R)-2-phosphoglycerate contacts are provided by Lys335, Arg364, Ser365, and Lys386. The Proton acceptor role is filled by Lys335.

It belongs to the enolase family. The cofactor is Mg(2+).

It localises to the cytoplasm. The protein resides in the secreted. It is found in the cell surface. It catalyses the reaction (2R)-2-phosphoglycerate = phosphoenolpyruvate + H2O. It participates in carbohydrate degradation; glycolysis; pyruvate from D-glyceraldehyde 3-phosphate: step 4/5. Catalyzes the reversible conversion of 2-phosphoglycerate (2-PG) into phosphoenolpyruvate (PEP). It is essential for the degradation of carbohydrates via glycolysis. In Mycolicibacterium vanbaalenii (strain DSM 7251 / JCM 13017 / BCRC 16820 / KCTC 9966 / NRRL B-24157 / PYR-1) (Mycobacterium vanbaalenii), this protein is Enolase.